We begin with the raw amino-acid sequence, 122 residues long: Large ribosomal subunit protein uL14 (122 aa).

It belongs to the universal ribosomal protein uL14 family. Part of the 50S ribosomal subunit. Forms a cluster with proteins L3 and L19. In the 70S ribosome, L14 and L19 interact and together make contacts with the 16S rRNA in bridges B5 and B8.

Functionally, binds to 23S rRNA. Forms part of two intersubunit bridges in the 70S ribosome. The sequence is that of Large ribosomal subunit protein uL14 from Latilactobacillus sakei subsp. sakei (strain 23K) (Lactobacillus sakei subsp. sakei).